A 140-amino-acid polypeptide reads, in one-letter code: Probable NADH dehydrogenase [ubiquinone] iron-sulfur protein 6, mitochondrial (140 aa).

Belongs to the complex I NDUFS6 subunit family. Complex I is composed of 45 different subunits. This is a component of the iron-sulfur (IP) fragment of the enzyme.

It is found in the mitochondrion inner membrane. Accessory subunit of the mitochondrial membrane respiratory chain NADH dehydrogenase (Complex I), that is believed not to be involved in catalysis. Complex I functions in the transfer of electrons from NADH to the respiratory chain. The immediate electron acceptor for the enzyme is believed to be ubiquinone. This chain is Probable NADH dehydrogenase [ubiquinone] iron-sulfur protein 6, mitochondrial (nduf-6), found in Caenorhabditis elegans.